Reading from the N-terminus, the 272-residue chain is Formamidopyrimidine-DNA glycosylase (272 aa).

Pro2 serves as the catalytic Schiff-base intermediate with DNA. Glu3 acts as the Proton donor in catalysis. The active-site Proton donor; for beta-elimination activity is the Lys58. DNA is bound by residues His94, Arg112, and Arg153. The FPG-type zinc-finger motif lies at 238–272 (FVYDRAGEPCRVCGAPIRQIVQGQRSTYFCPNCQR). Arg262 functions as the Proton donor; for delta-elimination activity in the catalytic mechanism.

It belongs to the FPG family. In terms of assembly, monomer. Zn(2+) is required as a cofactor.

It catalyses the reaction Hydrolysis of DNA containing ring-opened 7-methylguanine residues, releasing 2,6-diamino-4-hydroxy-5-(N-methyl)formamidopyrimidine.. It carries out the reaction 2'-deoxyribonucleotide-(2'-deoxyribose 5'-phosphate)-2'-deoxyribonucleotide-DNA = a 3'-end 2'-deoxyribonucleotide-(2,3-dehydro-2,3-deoxyribose 5'-phosphate)-DNA + a 5'-end 5'-phospho-2'-deoxyribonucleoside-DNA + H(+). In terms of biological role, involved in base excision repair of DNA damaged by oxidation or by mutagenic agents. Acts as a DNA glycosylase that recognizes and removes damaged bases. Has a preference for oxidized purines, such as 7,8-dihydro-8-oxoguanine (8-oxoG). Has AP (apurinic/apyrimidinic) lyase activity and introduces nicks in the DNA strand. Cleaves the DNA backbone by beta-delta elimination to generate a single-strand break at the site of the removed base with both 3'- and 5'-phosphates. The protein is Formamidopyrimidine-DNA glycosylase of Burkholderia mallei (strain NCTC 10229).